A 433-amino-acid polypeptide reads, in one-letter code: Phosphomethylpyrimidine synthase (433 aa).

Substrate-binding positions include Asn-68, Met-97, Tyr-126, His-162, 184–186 (SRG), 225–228 (DALR), and Glu-264. His-268 is a Zn(2+) binding site. Substrate is bound at residue Tyr-291. His-332 contacts Zn(2+). Residues Cys-408, Cys-411, and Cys-415 each coordinate [4Fe-4S] cluster.

Belongs to the ThiC family. [4Fe-4S] cluster is required as a cofactor.

It carries out the reaction 5-amino-1-(5-phospho-beta-D-ribosyl)imidazole + S-adenosyl-L-methionine = 4-amino-2-methyl-5-(phosphooxymethyl)pyrimidine + CO + 5'-deoxyadenosine + formate + L-methionine + 3 H(+). It participates in cofactor biosynthesis; thiamine diphosphate biosynthesis. In terms of biological role, catalyzes the synthesis of the hydroxymethylpyrimidine phosphate (HMP-P) moiety of thiamine from aminoimidazole ribotide (AIR) in a radical S-adenosyl-L-methionine (SAM)-dependent reaction. This is Phosphomethylpyrimidine synthase from Fusobacterium nucleatum subsp. nucleatum (strain ATCC 25586 / DSM 15643 / BCRC 10681 / CIP 101130 / JCM 8532 / KCTC 2640 / LMG 13131 / VPI 4355).